A 716-amino-acid polypeptide reads, in one-letter code: Polyribonucleotide nucleotidyltransferase (716 aa).

Mg(2+) contacts are provided by Asp-495 and Asp-501. The 60-residue stretch at 562–621 folds into the KH domain; sequence PRLFRIQINPEQIGLVIGPGGKTIRSITEQTGAKIDIEDTGAVTISAVDADSALRAKSII. Positions 631–699 constitute an S1 motif domain; that stretch reads GDVYIGKVTR…QKGRVNLTRK (69 aa).

It belongs to the polyribonucleotide nucleotidyltransferase family. Mg(2+) serves as cofactor.

It localises to the cytoplasm. It carries out the reaction RNA(n+1) + phosphate = RNA(n) + a ribonucleoside 5'-diphosphate. Involved in mRNA degradation. Catalyzes the phosphorolysis of single-stranded polyribonucleotides processively in the 3'- to 5'-direction. This is Polyribonucleotide nucleotidyltransferase from Synechococcus sp. (strain ATCC 27144 / PCC 6301 / SAUG 1402/1) (Anacystis nidulans).